Here is a 242-residue protein sequence, read N- to C-terminus: Ribonuclease PH (242 aa).

Phosphate-binding positions include Arg89 and 127–129 (GTR).

The protein belongs to the RNase PH family. Homohexameric ring arranged as a trimer of dimers.

It catalyses the reaction tRNA(n+1) + phosphate = tRNA(n) + a ribonucleoside 5'-diphosphate. In terms of biological role, phosphorolytic 3'-5' exoribonuclease that plays an important role in tRNA 3'-end maturation. Removes nucleotide residues following the 3'-CCA terminus of tRNAs; can also add nucleotides to the ends of RNA molecules by using nucleoside diphosphates as substrates, but this may not be physiologically important. Probably plays a role in initiation of 16S rRNA degradation (leading to ribosome degradation) during starvation. This chain is Ribonuclease PH, found in Neisseria meningitidis serogroup B (strain ATCC BAA-335 / MC58).